Reading from the N-terminus, the 84-residue chain is Small ribosomal subunit protein bS20 (84 aa).

Belongs to the bacterial ribosomal protein bS20 family.

Functionally, binds directly to 16S ribosomal RNA. In Porphyromonas gingivalis (strain ATCC 33277 / DSM 20709 / CIP 103683 / JCM 12257 / NCTC 11834 / 2561), this protein is Small ribosomal subunit protein bS20.